The sequence spans 540 residues: Zinc finger protein 768 (540 aa).

2 disordered regions span residues 1–166 and 239–258; these read MERE…FEAQ and TGAL…GQGP. Phosphoserine is present on residues Ser-17, Ser-18, and Ser-23. Tyr-27 is modified (phosphotyrosine). Ser-33 is modified (phosphoserine). Residues 34 to 53 show a composition bias toward acidic residues; sequence ENEEEEISQQEGSGDYEVEE. Phosphoserine occurs at positions 62, 69, 76, 83, 90, 97, 104, 107, 111, 118, and 125. Positions 62–77 are enriched in low complexity; sequence SPGFEPQSPEFEPQSP. The segment covering 107–119 has biased composition (polar residues); that stretch reads SDSQSPEFESQSP. Tyr-128 bears the Phosphotyrosine mark. Ser-132 carries the phosphoserine modification. Tyr-135 bears the Phosphotyrosine mark. The residue at position 139 (Ser-139) is a Phosphoserine. Tyr-142 carries the phosphotyrosine modification. Ser-144 and Ser-147 each carry phosphoserine. Residues 149–166 show a composition bias toward polar residues; the sequence is YESQNTELKTQSPEFEAQ. Thr-158 is subject to Phosphothreonine. Phosphoserine is present on Ser-160. The segment at 261 to 283 adopts a C2H2-type 1 zinc-finger fold; the sequence is NICGICGKSFGRGSTLIQHQRIH. A Phosphothreonine modification is found at Thr-284. Residue Tyr-289 is modified to Phosphotyrosine. C2H2-type zinc fingers lie at residues 289 to 311, 317 to 339, 345 to 367, and 373 to 395; these read YKCE…QRTH, YKCP…QRTH, and YSCT…QRVH. 2 positions are modified to phosphoserine: Ser-295 and Ser-299. Thr-396 is subject to Phosphothreonine. C2H2-type zinc fingers lie at residues 401-423, 429-451, 457-479, 485-507, and 513-535; these read FSCG…ARSH, FKCP…ARTH, YSCP…QRSH, YRCA…HRVH, and YKCD…QRTH. Ser-442 carries the phosphoserine modification.

The protein belongs to the krueppel C2H2-type zinc-finger protein family. As to quaternary structure, interacts (via zinc-finger domains) with TP53 (via N-terminus); interaction might be facilitated by TP53 oligomerization state. Interacts with ELP3. Post-translationally, may be phosphorylated at residue 'Ser-5' of the tandem heptapeptide repeats in the N-terminus. Phosphorylation might be increased upon RAS pathway activation and negatively regulate protein stability.

It localises to the nucleus. The protein resides in the chromosome. Its function is as follows. Binds to mammalian-wide interspersed repeat (MIRs) sequences in euchromatin and promoter regions of genes at the consensus sequence 5'-GCTGTGTG-[N20]-CCTCTCTG-3', consisting of two anchor regions connected by a linker region; the linker region probably does not contribute to the binding specificity. Required for cell homeostasis. May be involved in transcriptional regulation. The chain is Zinc finger protein 768 (ZNF768) from Homo sapiens (Human).